The chain runs to 354 residues: 3-dehydroquinate synthase (354 aa).

NAD(+) is bound by residues 100 to 104 (GATGD), 124 to 125 (TT), K136, K145, and 163 to 166 (FLKT). 3 residues coordinate Zn(2+): E178, H242, and H256.

It belongs to the sugar phosphate cyclases superfamily. Dehydroquinate synthase family. It depends on NAD(+) as a cofactor. Co(2+) serves as cofactor. The cofactor is Zn(2+).

Its subcellular location is the cytoplasm. The enzyme catalyses 7-phospho-2-dehydro-3-deoxy-D-arabino-heptonate = 3-dehydroquinate + phosphate. It functions in the pathway metabolic intermediate biosynthesis; chorismate biosynthesis; chorismate from D-erythrose 4-phosphate and phosphoenolpyruvate: step 2/7. In terms of biological role, catalyzes the conversion of 3-deoxy-D-arabino-heptulosonate 7-phosphate (DAHP) to dehydroquinate (DHQ). This is 3-dehydroquinate synthase from Staphylococcus aureus (strain MSSA476).